Reading from the N-terminus, the 56-residue chain is Protein hunchback (56 aa).

3 C2H2-type zinc fingers span residues 1 to 5 (HLRNH), 11 to 33 (FRCDKCDYQCVNKSMLNSHLKSH), and 39 to 56 (YRCADCTYATKYCHSLKL).

The protein belongs to the hunchback C2H2-type zinc-finger protein family.

The protein resides in the nucleus. Gap class segmentation protein that controls development of head structures. This is Protein hunchback (hb) from Locusta migratoria (Migratory locust).